The sequence spans 513 residues: ATP synthase subunit alpha (513 aa).

169-176 contacts ATP; it reads GDRQTGKT.

The protein belongs to the ATPase alpha/beta chains family. As to quaternary structure, F-type ATPases have 2 components, CF(1) - the catalytic core - and CF(0) - the membrane proton channel. CF(1) has five subunits: alpha(3), beta(3), gamma(1), delta(1), epsilon(1). CF(0) has three main subunits: a(1), b(2) and c(9-12). The alpha and beta chains form an alternating ring which encloses part of the gamma chain. CF(1) is attached to CF(0) by a central stalk formed by the gamma and epsilon chains, while a peripheral stalk is formed by the delta and b chains.

It is found in the cell inner membrane. It catalyses the reaction ATP + H2O + 4 H(+)(in) = ADP + phosphate + 5 H(+)(out). Functionally, produces ATP from ADP in the presence of a proton gradient across the membrane. The alpha chain is a regulatory subunit. This chain is ATP synthase subunit alpha, found in Aliivibrio fischeri (strain ATCC 700601 / ES114) (Vibrio fischeri).